Reading from the N-terminus, the 93-residue chain is MKMAKAAATNDFGFITCLVIFLVLAGISNGMRMTQKVSCIEGRTLWARPPKFFYCSSTLCEDNCINTGAYRGGTCDMEDEVAICRCHRCKKII.

The N-terminal stretch at 1-30 is a signal peptide; that stretch reads MKMAKAAATNDFGFITCLVIFLVLAGISNG. 4 disulfide bridges follow: C39–C89, C55–C75, C60–C84, and C64–C86.

Belongs to the DEFL family.

The protein localises to the secreted. The polypeptide is Putative defensin-like protein 190 (Arabidopsis thaliana (Mouse-ear cress)).